A 258-amino-acid polypeptide reads, in one-letter code: tRNA pseudouridine synthase A (258 aa).

The Nucleophile role is filled by Asp-52. Tyr-111 is a binding site for substrate.

It belongs to the tRNA pseudouridine synthase TruA family. Homodimer.

The catalysed reaction is uridine(38/39/40) in tRNA = pseudouridine(38/39/40) in tRNA. Formation of pseudouridine at positions 38, 39 and 40 in the anticodon stem and loop of transfer RNAs. The protein is tRNA pseudouridine synthase A of Azorhizobium caulinodans (strain ATCC 43989 / DSM 5975 / JCM 20966 / LMG 6465 / NBRC 14845 / NCIMB 13405 / ORS 571).